A 91-amino-acid chain; its full sequence is Putative defensin-like protein 83 (91 aa).

The first 27 residues, 1–27 (MATNKFLSILLLSLMAFAAILLPMISG), serve as a signal peptide directing secretion. 4 disulfides stabilise this stretch: cysteine 32–cysteine 71, cysteine 37–cysteine 57, cysteine 43–cysteine 69, and cysteine 47–cysteine 70.

It belongs to the DEFL family.

Its subcellular location is the secreted. This is Putative defensin-like protein 83 (LCR46) from Arabidopsis thaliana (Mouse-ear cress).